The sequence spans 200 residues: Recombination protein RecR (200 aa).

Residues 58–75 form a C4-type zinc finger; the sequence is CPTCFCLKSHPESVCSFC. The 96-residue stretch at 82-177 folds into the Toprim domain; that stretch reads SILCIVATPK…SVSRLALGLP (96 aa).

This sequence belongs to the RecR family.

May play a role in DNA repair. It seems to be involved in an RecBC-independent recombinational process of DNA repair. It may act with RecF and RecO. The chain is Recombination protein RecR from Chlamydia abortus (strain DSM 27085 / S26/3) (Chlamydophila abortus).